The chain runs to 540 residues: Lysosomal cobalamin transport escort protein LMBD1 (540 aa).

The Extracellular segment spans residues 1-10 (MATSGAASAE). A helical transmembrane segment spans residues 11-31 (LVIGWCIFGLLLLAILAFCWI). At 32 to 50 (YVRKYQSRRESEVVSTITA) the chain is on the cytoplasmic side. Residues 51 to 71 (IFSLAIALITSALLPVDIFLV) form a helical membrane-spanning segment. Residues 72-100 (SYMKNQNGTFKDWANANVSRQIEDTVLYG) are Extracellular-facing. N-linked (GlcNAc...) asparagine glycosylation is found at N78 and N88. The chain crosses the membrane as a helical span at residues 101 to 121 (YYTLYSVILFCVFFWIPFVYF). Over 122–144 (YYEEKDDDDTSKCTQIKTALKYT) the chain is Cytoplasmic. The helical transmembrane segment at 145–165 (LGFVVICALLLLVGAFVPLNV) threads the bilayer. Over 166-188 (PNNKNSTEWEKVKSLFEELGSSH) the chain is Extracellular. The N-linked (GlcNAc...) asparagine glycan is linked to N170. A helical membrane pass occupies residues 189 to 209 (GLAALSFSISSLTLIGMLAAI). At 210–305 (TYTAYGMSAL…KFCGALRPLK (96 aa)) the chain is on the cytoplasmic side. The YERL motif; mediates interaction with adapter protein complex 2 and is essential for its function in clathrin-mediated endocytosis of INSR motif lies at 232 to 235 (YERL). At T238 the chain carries Phosphothreonine. A WTKF motif; mediates interaction with adapter protein complex 2 and is essential for its function in clathrin-mediated endocytosis of INSR motif is present at residues 294–297 (WTKF). Residues 306 to 326 (IVWGIFFILVALLFVISLFLS) form a helical membrane-spanning segment. At 327–364 (NLDKALHSAGIDSGFIIFGANLSNPLNMLLPLLQTVFP) the chain is on the extracellular side. N-linked (GlcNAc...) asparagine glycosylation is present at N347. Residues 365–385 (LDYILITIIIMYFIFTSMAGI) form a helical membrane-spanning segment. At 386-408 (RNIGIWFFWIRLYKIRRGRTRPQ) the chain is on the cytoplasmic side. The chain crosses the membrane as a helical span at residues 409 to 429 (ALLFLCMILLLIVLHTSYMIY). The Extracellular portion of the chain corresponds to 430–486 (SLAPQYVMYGSQNYLIETNITSDNHKGNSTLSVPKRCDADAPEDQCTVTRTYLFLHK). N-linked (GlcNAc...) asparagine glycans are attached at residues N448 and N457. The chain crosses the membrane as a helical span at residues 487–507 (FWFFSAAYYFGNWAFLGVFLI). Over 508-540 (GLIVSCCKGKKSVIEGVDEDSDISDDEPSVYSA) the chain is Cytoplasmic. S528 and S531 each carry phosphoserine.

Belongs to the LIMR family. LMBRD1 subfamily. (Microbial infection) Interacts with hepatitis delta virus NES (HDAg-L). In terms of assembly, interacts with ABCD4; this interaction induces the translocation of ABCD4 from the endoplasmic reticulum to the lysosome. Interacts with ABCD4 and MMACHC; this interaction ensures the transport of cobalamin from the lysosome to the cytoplasm. Interacts with INSR, adapter protein complex 2 and clathrin heavy chain. In terms of processing, N-glycosylated. As to expression, isoform 3 is expressed in liver.

The protein localises to the endoplasmic reticulum membrane. The protein resides in the lysosome membrane. Its subcellular location is the cell membrane. It is found in the cytoplasmic vesicle. It localises to the clathrin-coated vesicle. Lysosomal membrane chaperone required to export cobalamin (vitamin B12) from the lysosome to the cytosol, allowing its conversion to cofactors. Targets ABCD4 transporter from the endoplasmic reticulum to the lysosome. Then forms a complex with lysosomal ABCD4 and cytoplasmic MMACHC to transport cobalamin across the lysosomal membrane. Acts as an adapter protein which plays an important role in mediating and regulating the internalization of the insulin receptor (INSR). Involved in clathrin-mediated endocytosis of INSR via its interaction with adapter protein complex 2. Essential for the initiation of gastrulation and early formation of mesoderm structures during embryogenesis. Functionally, (Microbial infection) May play a role in the assembly of hepatitis delta virus (HDV). This is Lysosomal cobalamin transport escort protein LMBD1 from Homo sapiens (Human).